The sequence spans 428 residues: uncharacterized protein (428 aa).

Disordered regions lie at residues 1–25 (MRDN…PTRT), 157–219 (DTAK…TEQV), and 247–271 (DFGT…PWRP). Polar residues predominate over residues 12–22 (GSESQQTTYDP). Positions 157 to 171 (DTAKSNEKLQGDESK) are enriched in basic and acidic residues. Over residues 172-186 (SSNGSSSTSTTTQRG) the composition is skewed to low complexity. The span at 206–217 (GSQGNSGEQGTE) shows a compositional bias: polar residues.

The protein belongs to the adhesin P1 family.

This is an uncharacterized protein from Mycoplasma pneumoniae (strain ATCC 29342 / M129 / Subtype 1) (Mycoplasmoides pneumoniae).